We begin with the raw amino-acid sequence, 2311 residues long: C2 domain-containing protein 3 (2311 aa).

2 disordered regions span residues 447–511 (SDSS…TSRC) and 543–562 (GTAV…RPVR). Positions 470-509 (IALDRGRHRDNSPSEYKEDAKQTKGNDSLRDSKTSEKSTS) are enriched in basic and acidic residues. C2 domains lie at 508–666 (TSRC…SVTC), 751–888 (GNGG…TRLL), 952–1112 (LDPP…HRED), 1136–1303 (PSGL…SGWY), 1370–1505 (HKRE…TLAV), and 1581–1713 (KTEV…CGWY). The interval 939-964 (GTSQTAMPRPAHFLDPPLSSSQMGRP) is disordered. Disordered regions lie at residues 1536–1589 (PSNS…LLDA), 1955–1977 (SEAY…GSLN), 2036–2065 (MTDR…PVNP), 2084–2233 (NDPS…SNLL), and 2261–2292 (VREG…PKEE). 2 stretches are compositionally biased toward basic and acidic residues: residues 1565 to 1589 (FEEK…LLDA) and 1955 to 1964 (SEAYEREGQR). Polar residues predominate over residues 2036–2047 (MTDRTSPWSSIL). The span at 2048-2059 (SERDSDSMDHPQ) shows a compositional bias: basic and acidic residues. The span at 2084 to 2095 (NDPSSVLSSARS) shows a compositional bias: polar residues. Residues 2138–2151 (AESEAESQEMDGDP) are compositionally biased toward acidic residues. Over residues 2221–2233 (GSESPQVPPSNLL) the composition is skewed to polar residues.

Its subcellular location is the cytoplasm. It is found in the cytoskeleton. It localises to the cilium basal body. The protein localises to the microtubule organizing center. The protein resides in the centrosome. Its subcellular location is the centriole. Its function is as follows. Component of the centrioles that acts as a positive regulator of centriole elongation. Promotes assembly of centriolar distal appendage, a structure at the distal end of the mother centriole that acts as an anchor of the cilium. Required for primary cilium formation. The protein is C2 domain-containing protein 3 (c2cd3) of Xenopus tropicalis (Western clawed frog).